A 457-amino-acid chain; its full sequence is Putative zinc finger CCCH domain-containing protein 21 (457 aa).

Disordered stretches follow at residues 51-73, 102-130, 195-221, and 280-329; these read PTSS…ARAS, LESP…EKLL, TSPS…ERER, and RKQA…RLRV. A compositionally biased stretch (gly residues) spans 57-66; the sequence is DGGGGGGGGY. Residues 215–276 are a coiled coil; the sequence is ASAEREREVR…HLSLLLEELE (62 aa). C3H1-type zinc fingers lie at residues 382-409 and 419-447; these read AAKT…HGLQ and RYKT…HSPL.

The protein is Putative zinc finger CCCH domain-containing protein 21 of Oryza sativa subsp. japonica (Rice).